A 419-amino-acid chain; its full sequence is Murein hydrolase activator EnvC (419 aa).

The signal sequence occupies residues 1-34 (MTRAVKPRRFAIRPIIYASVLSAGVLLCAFSAHA). 2 coiled-coil regions span residues 35 to 124 (DERD…LDAA) and 155 to 271 (LNQA…ATRK). A compositionally biased stretch (basic and acidic residues) spans 252-270 (EREAREAQAVRDRQKEATR). A disordered region spans residues 252-290 (EREAREAQAVRDRQKEATRKGTTYKPTESEKSLMSRTGG).

This sequence belongs to the peptidase M23B family.

The protein resides in the periplasm. Activator of the cell wall hydrolases AmiA and AmiB. Required for septal murein cleavage and daughter cell separation during cell division. In vitro, exhibits weak endoproteolytic activity on beta-casein. The polypeptide is Murein hydrolase activator EnvC (envC) (Escherichia coli (strain K12)).